The following is a 241-amino-acid chain: U2 small nuclear ribonucleoprotein B'' (241 aa).

The 80-residue stretch at 12–91 (QTLYVNNLYE…RPMKIQYCKS (80 aa)) folds into the RRM 1 domain. Basic and acidic residues predominate over residues 99–126 (LDGTYMEKKREREENDKKGSNKKQDRKS). The interval 99–169 (LDGTYMEKKR…PRDDPPNKTL (71 aa)) is disordered. Residues 129–152 (QQQQQQKRPGAPTSTTSTTSPTTS) are compositionally biased toward low complexity. One can recognise an RRM 2 domain in the interval 167–241 (KTLFVENLPD…KPMVVSFAAQ (75 aa)).

It belongs to the RRM U1 A/B'' family. In terms of assembly, identified in the spliceosome B complex. Identified in the spliceosome C complex.

It is found in the nucleus. Functionally, involved in pre-mRNA splicing as component of the spliceosome. Associated with sn-RNP U2, where it contributes to the binding of stem loop IV of U2 snRNA. The polypeptide is U2 small nuclear ribonucleoprotein B'' (snrpb2) (Dictyostelium discoideum (Social amoeba)).